The chain runs to 385 residues: Cytochrome b (385 aa).

4 helical membrane-spanning segments follow: residues 32 to 52 (FGSL…TLAM), 76 to 98 (WLIR…LHIG), 113 to 133 (AWIL…LGYV), and 179 to 199 (FFAL…MHLI). Heme b contacts are provided by His-82 and His-96. His-183 and His-197 together coordinate heme b. His-202 lines the a ubiquinone pocket. Helical transmembrane passes span 226-246 (YLFK…IFVF), 290-310 (LLGV…PKTD), 322-342 (LSKI…QLGA), and 349-369 (FIEF…IIMP).

Belongs to the cytochrome b family. As to quaternary structure, fungal cytochrome b-c1 complex contains 10 subunits; 3 respiratory subunits, 2 core proteins and 5 low-molecular weight proteins. Cytochrome b-c1 complex is a homodimer. Heme b serves as cofactor.

The protein resides in the mitochondrion inner membrane. In terms of biological role, component of the ubiquinol-cytochrome c reductase complex (complex III or cytochrome b-c1 complex) that is part of the mitochondrial respiratory chain. The b-c1 complex mediates electron transfer from ubiquinol to cytochrome c. Contributes to the generation of a proton gradient across the mitochondrial membrane that is then used for ATP synthesis. This is Cytochrome b (cob) from Akanthomyces muscarius (Entomopathogenic fungus).